The following is a 295-amino-acid chain: Nuclear transcription factor Y subunit A-2 (295 aa).

Positions 139–165 match the Subunit association domain (SAD) motif; sequence YVNSKQYHGIIRRRQSRAKAAAVLDQK. The segment at residues 173–198 is a DNA-binding region (NFYA/HAP2-type); it reads KPYMHHSRHLHALRRPRGSGGRFLNT. A compositionally biased stretch (basic residues) spans 178–189; it reads HSRHLHALRRPR. The interval 178–244 is disordered; that stretch reads HSRHLHALRR…VVHPENGTMN (67 aa). A compositionally biased stretch (polar residues) spans 197-209; the sequence is NTKSQNLENSGTN. Residues 216–233 are compositionally biased toward low complexity; sequence SMQIQSQPKPQQSNSQNS.

Belongs to the NFYA/HAP2 subunit family. As to quaternary structure, heterotrimeric transcription factor composed of three components, NF-YA, NF-YB and NF-YC. NF-YB and NF-YC must interact and dimerize for NF-YA association and DNA binding. Component of a heat stress-inducible transcriptional complex with NF-YA and NF-YB subunits made, at least, of NFYA2, NFYB3 and DPB3-1 in cooperation with DREB2A. In terms of tissue distribution, ubiquitous. Expressed in seedlings, roots, petioles, hypocotyls, reproductive organ tissues and leaves.

It is found in the nucleus. Stimulates the transcription of various genes by recognizing and binding to a CCAAT motif in promoters. Promotes the expression of heat stress-inducible genes by contributing to the formation of a heat stress-specific transcriptional complex with NF-Y subunits (e.g. DPB3-1, NF-YA2 and NF-YB3) and DREB2A at the promoter of target genes, thus promoting heat tolerance. The sequence is that of Nuclear transcription factor Y subunit A-2 from Arabidopsis thaliana (Mouse-ear cress).